We begin with the raw amino-acid sequence, 297 residues long: 33 kDa chaperonin (297 aa).

2 disulfides stabilise this stretch: Cys-234–Cys-236 and Cys-267–Cys-270.

The protein belongs to the HSP33 family. Under oxidizing conditions two disulfide bonds are formed involving the reactive cysteines. Under reducing conditions zinc is bound to the reactive cysteines and the protein is inactive.

The protein resides in the cytoplasm. Functionally, redox regulated molecular chaperone. Protects both thermally unfolding and oxidatively damaged proteins from irreversible aggregation. Plays an important role in the bacterial defense system toward oxidative stress. This chain is 33 kDa chaperonin, found in Pseudoalteromonas atlantica (strain T6c / ATCC BAA-1087).